The following is a 693-amino-acid chain: Polyribonucleotide nucleotidyltransferase (693 aa).

Mg(2+) contacts are provided by aspartate 485 and aspartate 491. The 60-residue stretch at proline 552–valine 611 folds into the KH domain. The 71-residue stretch at glycine 621–lysine 691 folds into the S1 motif domain.

It belongs to the polyribonucleotide nucleotidyltransferase family. Requires Mg(2+) as cofactor.

It is found in the cytoplasm. The enzyme catalyses RNA(n+1) + phosphate = RNA(n) + a ribonucleoside 5'-diphosphate. Involved in mRNA degradation. Catalyzes the phosphorolysis of single-stranded polyribonucleotides processively in the 3'- to 5'-direction. In Dictyoglomus thermophilum (strain ATCC 35947 / DSM 3960 / H-6-12), this protein is Polyribonucleotide nucleotidyltransferase.